The sequence spans 273 residues: Urease accessory protein UreD (273 aa).

This sequence belongs to the UreD family. UreD, UreF and UreG form a complex that acts as a GTP-hydrolysis-dependent molecular chaperone, activating the urease apoprotein by helping to assemble the nickel containing metallocenter of UreC. The UreE protein probably delivers the nickel.

The protein localises to the cytoplasm. Required for maturation of urease via the functional incorporation of the urease nickel metallocenter. This chain is Urease accessory protein UreD, found in Rhizobium leguminosarum bv. trifolii (strain WSM2304).